The chain runs to 250 residues: U6 snRNA phosphodiesterase 1 (250 aa).

Residues 1–31 are disordered; the sequence is MALVSYSSSEEDEGETSEPPGRRLPPLPPPT. Over residues 22-31 the composition is skewed to pro residues; the sequence is RRLPPLPPPT. The Proton acceptor role is filled by H105. AMP is bound at residue 105–107; the sequence is HIS. UMP is bound by residues Q149, Y187, and 191 to 195; that span reads SFHVS. AMP-binding positions include Y187 and 189–195; that span reads EPSFHVS. H193 (proton donor) is an active-site residue.

It belongs to the 2H phosphoesterase superfamily. USB1 family.

The protein localises to the nucleus. The catalysed reaction is a 3'-end uridylyl-uridine-RNA = a 3'-end 2',3'-cyclophospho-uridine-RNA + uridine. It carries out the reaction a 3'-end uridylyl-adenosine-RNA = a 3'-end 2',3'-cyclophospho-uridine-RNA + adenosine. In terms of biological role, 3'-5' RNA exonuclease that trims the 3' end of oligo(U) and oligo(A) tracts of the pre-U6 small nuclear RNA (snRNA) molecule, leading to the formation of a mature U6 snRNA 3' end-terminated with a 2',3'-cyclic phosphate. Participates in the U6 snRNA 3' end processing that prevents U6 snRNA degradation. In addition also removes uridines from the 3' end of U6atac snRNA and possibly the vault RNA VTRNA1-1. This chain is U6 snRNA phosphodiesterase 1, found in Xenopus laevis (African clawed frog).